A 284-amino-acid polypeptide reads, in one-letter code: 4-diphosphocytidyl-2-C-methyl-D-erythritol kinase (284 aa).

Residue K14 is part of the active site. 98-108 (PMGGGLGGGSS) serves as a coordination point for ATP. D140 is a catalytic residue.

This sequence belongs to the GHMP kinase family. IspE subfamily.

It catalyses the reaction 4-CDP-2-C-methyl-D-erythritol + ATP = 4-CDP-2-C-methyl-D-erythritol 2-phosphate + ADP + H(+). It functions in the pathway isoprenoid biosynthesis; isopentenyl diphosphate biosynthesis via DXP pathway; isopentenyl diphosphate from 1-deoxy-D-xylulose 5-phosphate: step 3/6. Functionally, catalyzes the phosphorylation of the position 2 hydroxy group of 4-diphosphocytidyl-2C-methyl-D-erythritol. The protein is 4-diphosphocytidyl-2-C-methyl-D-erythritol kinase of Shewanella baltica (strain OS185).